The sequence spans 52 residues: Large ribosomal subunit protein bL32c (52 aa).

The protein belongs to the bacterial ribosomal protein bL32 family.

The protein resides in the plastid. The protein localises to the chloroplast. The polypeptide is Large ribosomal subunit protein bL32c (Lobularia maritima (Sweet alyssum)).